A 96-amino-acid chain; its full sequence is Keratin-associated protein 12-3 (96 aa).

14 consecutive repeat copies span residues 10–14 (CQPTC), 15–19 (CIHSP), 24–28 (CYVPV), 30–34 (CQSSV), 35–39 (CMPVS), 45–49 (CVAPS), 50–54 (CQPSV), 55–59 (CVPVS), 60–64 (CRPII), 70–74 (CQSSG), 75–79 (CCQPP), 80–84 (CTTAL), 85–89 (CRPIS), and 90–94 (CSTPS). The segment at 10 to 94 (CQPTCCIHSP…CRPISCSTPS (85 aa)) is 14 X 5 AA approximate repeats.

Belongs to the KRTAP type 12 family. As to quaternary structure, interacts with hair keratins. In terms of tissue distribution, restricted to a narrow region of the hair fiber cuticle, lying approximately 20 cell layers above the apex of the dermal papilla of the hair root; not detected in any other tissues.

Its function is as follows. In the hair cortex, hair keratin intermediate filaments are embedded in an interfilamentous matrix, consisting of hair keratin-associated proteins (KRTAP), which are essential for the formation of a rigid and resistant hair shaft through their extensive disulfide bond cross-linking with abundant cysteine residues of hair keratins. The matrix proteins include the high-sulfur and high-glycine-tyrosine keratins. The protein is Keratin-associated protein 12-3 (KRTAP12-3) of Homo sapiens (Human).